The primary structure comprises 441 residues: Phenylalanine-4-hydroxylase (441 aa).

Residues 23-102 form the ACT domain; the sequence is FSISKGSDKI…KATTLQESSN (80 aa). 3 residues coordinate Fe cation: H273, H278, and E318.

Belongs to the biopterin-dependent aromatic amino acid hydroxylase family. Homotetramer. Fe(2+) serves as cofactor.

It catalyses the reaction (6R)-L-erythro-5,6,7,8-tetrahydrobiopterin + L-phenylalanine + O2 = (4aS,6R)-4a-hydroxy-L-erythro-5,6,7,8-tetrahydrobiopterin + L-tyrosine. It carries out the reaction (6R)-L-erythro-5,6,7,8-tetrahydrobiopterin + L-tryptophan + O2 = 5-hydroxy-L-tryptophan + (4aS,6R)-4a-hydroxy-L-erythro-5,6,7,8-tetrahydrobiopterin. The protein operates within amino-acid degradation; L-phenylalanine degradation; acetoacetate and fumarate from L-phenylalanine: step 1/6. Its function is as follows. Catalyzes the hydroxylation of L-phenylalanine. Hydroxylates L-tryptophan to 5-hydroxy-L-tryptophan but does not hydroxylate L-tyrosine to L-DOPA. It uses D-threo-tetrahydrodictyopterin (DH4), also known as dictyoperin, as a cofactor. This chain is Phenylalanine-4-hydroxylase (pah), found in Dictyostelium discoideum (Social amoeba).